The sequence spans 194 residues: Ribose 1,5-bisphosphate phosphokinase PhnN (194 aa).

24–31 contacts ATP; that stretch reads GPSGAGKD.

The protein belongs to the ribose 1,5-bisphosphokinase family.

The enzyme catalyses alpha-D-ribose 1,5-bisphosphate + ATP = 5-phospho-alpha-D-ribose 1-diphosphate + ADP. The protein operates within metabolic intermediate biosynthesis; 5-phospho-alpha-D-ribose 1-diphosphate biosynthesis; 5-phospho-alpha-D-ribose 1-diphosphate from D-ribose 5-phosphate (route II): step 3/3. Catalyzes the phosphorylation of ribose 1,5-bisphosphate to 5-phospho-D-ribosyl alpha-1-diphosphate (PRPP). In Rhodopseudomonas palustris (strain ATCC BAA-98 / CGA009), this protein is Ribose 1,5-bisphosphate phosphokinase PhnN.